Consider the following 354-residue polypeptide: Uroporphyrinogen decarboxylase (354 aa).

Residues 27–31 (RQAGR), Asp-77, Tyr-154, Thr-209, and His-327 contribute to the substrate site.

This sequence belongs to the uroporphyrinogen decarboxylase family. As to quaternary structure, homodimer.

It is found in the cytoplasm. The catalysed reaction is uroporphyrinogen III + 4 H(+) = coproporphyrinogen III + 4 CO2. It participates in porphyrin-containing compound metabolism; protoporphyrin-IX biosynthesis; coproporphyrinogen-III from 5-aminolevulinate: step 4/4. Catalyzes the decarboxylation of four acetate groups of uroporphyrinogen-III to yield coproporphyrinogen-III. The chain is Uroporphyrinogen decarboxylase from Pseudomonas putida (strain ATCC 700007 / DSM 6899 / JCM 31910 / BCRC 17059 / LMG 24140 / F1).